A 252-amino-acid chain; its full sequence is 2-succinyl-6-hydroxy-2,4-cyclohexadiene-1-carboxylate synthase (252 aa).

This sequence belongs to the AB hydrolase superfamily. MenH family. Monomer.

The catalysed reaction is 5-enolpyruvoyl-6-hydroxy-2-succinyl-cyclohex-3-ene-1-carboxylate = (1R,6R)-6-hydroxy-2-succinyl-cyclohexa-2,4-diene-1-carboxylate + pyruvate. It participates in quinol/quinone metabolism; 1,4-dihydroxy-2-naphthoate biosynthesis; 1,4-dihydroxy-2-naphthoate from chorismate: step 3/7. Its pathway is quinol/quinone metabolism; menaquinone biosynthesis. In terms of biological role, catalyzes a proton abstraction reaction that results in 2,5-elimination of pyruvate from 2-succinyl-5-enolpyruvyl-6-hydroxy-3-cyclohexene-1-carboxylate (SEPHCHC) and the formation of 2-succinyl-6-hydroxy-2,4-cyclohexadiene-1-carboxylate (SHCHC). This is 2-succinyl-6-hydroxy-2,4-cyclohexadiene-1-carboxylate synthase from Escherichia coli (strain SE11).